The following is a 127-amino-acid chain: DNA-directed RNA polymerase subunit omega (127 aa).

This sequence belongs to the RNA polymerase subunit omega family. The RNAP catalytic core consists of 2 alpha, 1 beta, 1 beta' and 1 omega subunit. When a sigma factor is associated with the core the holoenzyme is formed, which can initiate transcription.

The enzyme catalyses RNA(n) + a ribonucleoside 5'-triphosphate = RNA(n+1) + diphosphate. Its function is as follows. Promotes RNA polymerase assembly. Latches the N- and C-terminal regions of the beta' subunit thereby facilitating its interaction with the beta and alpha subunits. The protein is DNA-directed RNA polymerase subunit omega of Rickettsia rickettsii (strain Iowa).